A 227-amino-acid polypeptide reads, in one-letter code: Deoxyribose-phosphate aldolase (227 aa).

D84 acts as the Proton donor/acceptor in catalysis. The Schiff-base intermediate with acetaldehyde role is filled by K146. Residue K188 is the Proton donor/acceptor of the active site.

Belongs to the DeoC/FbaB aldolase family. DeoC type 1 subfamily.

The protein localises to the cytoplasm. It catalyses the reaction 2-deoxy-D-ribose 5-phosphate = D-glyceraldehyde 3-phosphate + acetaldehyde. It functions in the pathway carbohydrate degradation; 2-deoxy-D-ribose 1-phosphate degradation; D-glyceraldehyde 3-phosphate and acetaldehyde from 2-deoxy-alpha-D-ribose 1-phosphate: step 2/2. In terms of biological role, catalyzes a reversible aldol reaction between acetaldehyde and D-glyceraldehyde 3-phosphate to generate 2-deoxy-D-ribose 5-phosphate. The protein is Deoxyribose-phosphate aldolase of Pyrobaculum islandicum (strain DSM 4184 / JCM 9189 / GEO3).